The sequence spans 249 residues: uncharacterized protein (249 aa).

It localises to the cytoplasm. The protein resides in the nucleus. This is an uncharacterized protein from Schizosaccharomyces pombe (strain 972 / ATCC 24843) (Fission yeast).